Reading from the N-terminus, the 155-residue chain is Late embryogenesis abundant protein 2 (155 aa).

The interval 1 to 155 (MTSHDQSYRA…DKDHFPTNRH (155 aa)) is disordered. Composition is skewed to basic and acidic residues over residues 11–21 (GEAKGRTEEKT) and 28–39 (IEDKAQAAKEKA). Residues 40 to 78 (QQAAQTAKDKTSQTAQAAKEKTQQTAQAAKDKTQQTTQA) show a composition bias toward low complexity. Repeat copies occupy residues 53 to 63 (TAQAAKEKTQQ) and 64 to 74 (TAQAAKDKTQQ). Residues 53 to 74 (TAQAAKEKTQQTAQAAKDKTQQ) are 2 X 11 AA approximate tandem repeats of T-A-Q-A-A-K-E-K-T-Q-Q. Basic and acidic residues predominate over residues 79-95 (TKEKAQDTTGRAKEKGS). A compositionally biased stretch (polar residues) spans 97–120 (MGQSTKETAQSGKDNSAGFLQQTG). Residues 144–155 (DQDKDHFPTNRH) show a composition bias toward basic and acidic residues.

This sequence belongs to the LEA type 4 family. Highest expression is found in seeds. No expression detected in adult tissues.

The polypeptide is Late embryogenesis abundant protein 2 (Cicer arietinum (Chickpea)).